A 577-amino-acid polypeptide reads, in one-letter code: Arginine--tRNA ligase (577 aa).

Positions 124–132 (VAKEMHVGH) match the 'HIGH' region motif.

Belongs to the class-I aminoacyl-tRNA synthetase family. In terms of assembly, monomer.

It localises to the cytoplasm. The enzyme catalyses tRNA(Arg) + L-arginine + ATP = L-arginyl-tRNA(Arg) + AMP + diphosphate. This Salmonella typhi protein is Arginine--tRNA ligase.